Reading from the N-terminus, the 600-residue chain is ATP-dependent lipid A-core flippase (600 aa).

4 consecutive transmembrane segments (helical) span residues 27-47, 83-103, 174-194, and 267-287; these read ISLFLISIVGFLIFASTQPML, LLIILIAAWQGLGSYLGNYFL, LLFMNWKLTLVMVAILPLIAV, and PLLQLVIYSAMAILMFLVLYL. In terms of domain architecture, ABC transmembrane type-1 spans 31-322; the sequence is LISIVGFLIF…LSEVSSTIQK (292 aa). Residues 354–590 form the ABC transporter domain; that stretch reads LDVRNLSFTY…NGYYARLNAM (237 aa). ATP is bound at residue 388-395; sequence GRSGSGKS.

This sequence belongs to the ABC transporter superfamily. Lipid exporter (TC 3.A.1.106) family. In terms of assembly, homodimer.

The protein localises to the cell inner membrane. The enzyme catalyses ATP + H2O + lipid A-core oligosaccharideSide 1 = ADP + phosphate + lipid A-core oligosaccharideSide 2.. Involved in lipopolysaccharide (LPS) biosynthesis. Translocates lipid A-core from the inner to the outer leaflet of the inner membrane. Transmembrane domains (TMD) form a pore in the inner membrane and the ATP-binding domain (NBD) is responsible for energy generation. The sequence is that of ATP-dependent lipid A-core flippase from Pseudomonas fluorescens (strain Pf0-1).